A 184-amino-acid polypeptide reads, in one-letter code: Large ribosomal subunit protein uL5 (184 aa).

It belongs to the universal ribosomal protein uL5 family. Part of the 50S ribosomal subunit; part of the 5S rRNA/L5/L18/L25 subcomplex. Contacts the 5S rRNA and the P site tRNA. Forms a bridge to the 30S subunit in the 70S ribosome.

In terms of biological role, this is one of the proteins that bind and probably mediate the attachment of the 5S RNA into the large ribosomal subunit, where it forms part of the central protuberance. In the 70S ribosome it contacts protein S13 of the 30S subunit (bridge B1b), connecting the 2 subunits; this bridge is implicated in subunit movement. Contacts the P site tRNA; the 5S rRNA and some of its associated proteins might help stabilize positioning of ribosome-bound tRNAs. In Fervidobacterium nodosum (strain ATCC 35602 / DSM 5306 / Rt17-B1), this protein is Large ribosomal subunit protein uL5.